The primary structure comprises 335 residues: Glycerol-3-phosphate dehydrogenase [NAD(P)+] (335 aa).

NADPH is bound by residues Ser12, Trp13, His33, Arg34, and Lys108. Sn-glycerol 3-phosphate contacts are provided by Lys108, Gly137, and Thr139. Residue Ala141 participates in NADPH binding. The sn-glycerol 3-phosphate site is built by Lys192, Asp245, Ser255, Arg256, and Asn257. Lys192 serves as the catalytic Proton acceptor. Arg256 is a binding site for NADPH. Residue Glu282 participates in NADPH binding.

Belongs to the NAD-dependent glycerol-3-phosphate dehydrogenase family.

It is found in the cytoplasm. It catalyses the reaction sn-glycerol 3-phosphate + NAD(+) = dihydroxyacetone phosphate + NADH + H(+). The catalysed reaction is sn-glycerol 3-phosphate + NADP(+) = dihydroxyacetone phosphate + NADPH + H(+). The protein operates within membrane lipid metabolism; glycerophospholipid metabolism. Functionally, catalyzes the reduction of the glycolytic intermediate dihydroxyacetone phosphate (DHAP) to sn-glycerol 3-phosphate (G3P), the key precursor for phospholipid synthesis. This chain is Glycerol-3-phosphate dehydrogenase [NAD(P)+], found in Methylococcus capsulatus (strain ATCC 33009 / NCIMB 11132 / Bath).